The following is a 679-amino-acid chain: MSRAAPRRASQSQSTRPARGLRRPPGAQEVGQRKRPGKTQKARQAQEATKSRPATRSDVAPAGRSTRARRTRQVVDVGTRGASFVFRHRTGNAVILVLMLVAATQLFFLQVSHAAGLRAQAAGQLKVTDVQPAARGSIVDRNNDRLAFTIEARALTFQPKRIRRQLEEARKKTSAAPDPQQRLRDIAQEVAGKLNNKPDAAAVLKKLQSDETFVYLARAVDPAVASAICAKYPEVGAERQDLRQYPGGSLAANVVGGIDWDGHGLLGLEDSLDAVLAGTDGSVTYDRGSDGVVIPGSYRNRHKAVHGSTVVLTLDNDIQFYVQQQVQQAKNLSGAHNVSAVVLDAKTGEVLAMANDNTFDPSQDIGRQGDKQLGNPAVSSPFEPGSVNKIVAASAVIEHGLSSPDEVLQVPGSIQMGGVTVHDAWEHGVMPYTTTGVFGKSSNVGTLMLSQRVGPERYYDMLRKFGLGQRTGVGLPGESAGLVPPIDQWSGSTFANLPIGQGLSMTLLQMTGMYQAIANDGVRVPPRIIKATVAPDGSRTEEPRPDDIRVVSAQTAQTVRQMLRAVVQRDPMGYQQGTGPTAGVPGYQMAGKTGTAQQINPGCGCYFDDVYWITFAGIATADNPRYVIGIMLDNPARNSDGAPGHSAAPLFHNIAGWLMQRENVPLSPDPGPPLVLQAT.

The segment at 1–74 is disordered; the sequence is MSRAAPRRAS…STRARRTRQV (74 aa). Residues 1–90 are Cytoplasmic-facing; it reads MSRAAPRRAS…GASFVFRHRT (90 aa). A compositionally biased stretch (polar residues) spans 42 to 54; sequence ARQAQEATKSRPA. A helical membrane pass occupies residues 91–111; the sequence is GNAVILVLMLVAATQLFFLQV. Residues 112 to 679 are Extracellular-facing; it reads SHAAGLRAQA…PGPPLVLQAT (568 aa). The active-site Acyl-ester intermediate is S386.

This sequence belongs to the transpeptidase family. In terms of assembly, interacts with Wag31. Post-translationally, cleaved by Rip1 in response to oxidative stress (H(2)O(2)), prevented by Wag31. Cleavage probably occurs near residues 102-103.

The protein localises to the cell membrane. It functions in the pathway cell wall biogenesis; peptidoglycan biosynthesis. Functionally, synthesis of cross-linked peptidoglycan from the lipid intermediates. In Mycobacterium tuberculosis (strain ATCC 25618 / H37Rv), this protein is Penicillin-binding protein PbpB (pbpB).